The following is an 825-amino-acid chain: Thioredoxin domain-containing protein 16 (825 aa).

The signal sequence occupies residues 1-27 (MFSGFNVFRVGISFVIMCIFYMPTVNS). The region spanning 392-495 (LTVELTEETF…EDLLKFIQLN (104 aa)) is the Thioredoxin domain. Cysteine 449 and cysteine 456 form a disulfide bridge. The N-linked (GlcNAc...) asparagine glycan is linked to asparagine 460. The tract at residues 762 to 787 (RKVPKCMKETDVQENDKEQHEDKSAV) is disordered. Residues 767 to 787 (CMKETDVQENDKEQHEDKSAV) are compositionally biased toward basic and acidic residues. The Mediates endoplasmic reticulum retention signature appears at 816–819 (DKEL).

Interacts with FOXRED2. Glycosylated.

It is found in the secreted. Its subcellular location is the endoplasmic reticulum lumen. The sequence is that of Thioredoxin domain-containing protein 16 from Homo sapiens (Human).